A 301-amino-acid chain; its full sequence is Troponin T, cardiac muscle (301 aa).

Composition is skewed to acidic residues over residues 1 to 42 (MSDL…EEEA) and 50 to 74 (AETE…DGPV). Disordered regions lie at residues 1–99 (MSDL…GERV) and 125–223 (ENRK…KKKK). Ser-2 is modified (N-acetylserine). Ser-2 carries the post-translational modification Phosphoserine; by CK2. Residues 82 to 93 (RPFMPNLVPPKI) show a composition bias toward pro residues. Composition is skewed to basic and acidic residues over residues 125 to 186 (ENRK…DEAR) and 206 to 223 (QTER…KKKK). Thr-207 carries the phosphothreonine; by PKC/PRKCA modification. Ser-211 is subject to Phosphoserine; by PKC/PRKCA. Thr-216 is modified (phosphothreonine; by PKC/PRKCA and RAF1). Phosphothreonine; by PKC/PRKCA is present on Thr-297.

It belongs to the troponin T family. As to quaternary structure, binds with troponins I and C to make the thin-filament regulatory complex, troponin. Post-translationally, phosphorylation at Thr-216 by PRKCA induces significant reduction in myofilament calcium sensitivity and actomyosin ATPase activity. As to expression, the major isoform in adult heart is CTNT4.

Its function is as follows. Troponin T is the tropomyosin-binding subunit of troponin, the thin filament regulatory complex which confers calcium-sensitivity to striated muscle actomyosin ATPase activity. This chain is Troponin T, cardiac muscle (TNNT2), found in Oryctolagus cuniculus (Rabbit).